The primary structure comprises 443 residues: Trigger factor (443 aa).

The PPIase FKBP-type domain occupies 163-249 (KDAAIIDYQA…LKSLKEEILP (87 aa)).

This sequence belongs to the FKBP-type PPIase family. Tig subfamily.

The protein localises to the cytoplasm. It carries out the reaction [protein]-peptidylproline (omega=180) = [protein]-peptidylproline (omega=0). Functionally, involved in protein export. Acts as a chaperone by maintaining the newly synthesized protein in an open conformation. Functions as a peptidyl-prolyl cis-trans isomerase. The protein is Trigger factor of Desulfosudis oleivorans (strain DSM 6200 / JCM 39069 / Hxd3) (Desulfococcus oleovorans).